Here is a 2531-residue protein sequence, read N- to C-terminus: Mediator of RNA polymerase II transcription subunit 12 (2531 aa).

Disordered regions lie at residues 1–41, 204–283, 584–604, and 742–762; these read MLSM…VKHG, QNHD…GSVM, VSRR…PKQD, and TTAT…THGF. Low complexity predominate over residues 210–247; it reads SSNGTTSGSLTAAGNGPASNGSTGTSSINSVTGSSAST. Residues 586–604 are compositionally biased toward basic and acidic residues; the sequence is RRREEDQVEPRPPYEPKQD. Phosphothreonine is present on T745. 2 positions are modified to phosphoserine: S748 and S781. Over residues 748–757 the composition is skewed to pro residues; it reads SPPPPAPPPT. Positions 796–805 are enriched in basic and acidic residues; the sequence is EKGQQHEAPD. The tract at residues 796 to 824 is disordered; that stretch reads EKGQQHEAPDSPKIGPPGDGETNPGGSIS. A phosphoserine mark is found at S806 and S1356. T1360 carries the post-translational modification Phosphothreonine. Polar residues-rich tracts occupy residues 1585-1595 and 1901-1910; these read VSKSDCNSSGS and TPSSVDQSPS. Disordered stretches follow at residues 1585 to 1608, 1898 to 2092, 2114 to 2218, and 2469 to 2508; these read VSKS…CHSS, KADT…NQYA, QALS…GMAP, and MGGG…QQQT. A compositionally biased stretch (basic residues) spans 1919–1933; the sequence is GRGKGTTTRKRKPKN. 2 stretches are compositionally biased toward low complexity: residues 1938–2038 and 2045–2055; these read PVVN…QQLN and QPNPQMNFMQQ. A compositionally biased stretch (gly residues) spans 2056–2066; it reads GPGGGGAGPQG. Composition is skewed to low complexity over residues 2067-2080, 2121-2132, and 2139-2205; these read MPGQ…APQQ, RQRQPFQQQAQQ, and NPMQ…QQQQ. Positions 2469–2496 are enriched in gly residues; that stretch reads MGGGAGGGMGAGPQQGGGAVGGGAGGGM. The segment covering 2497-2507 has biased composition (low complexity); sequence VPQQQSMNQQQ.

The protein belongs to the Mediator complex subunit 12 family. Component of the Cdk8 module of the Mediator complex, composed of CycC, Cdk8, kto and skd.

The protein localises to the nucleus. Component of the Mediator complex, a coactivator involved in regulated gene transcription of nearly all RNA polymerase II-dependent genes. Mediator functions as a bridge to convey information from gene-specific regulatory proteins to the basal RNA polymerase II transcription machinery. Mediator is recruited to promoters by direct interactions with regulatory proteins and serves as a scaffold for the assembly of a functional preinitiation complex with RNA polymerase II and the general transcription factors. Required for leg and eye development and macrochaete specification or differentiation. This is Mediator of RNA polymerase II transcription subunit 12 (kto) from Drosophila melanogaster (Fruit fly).